The sequence spans 123 residues: Beta-2-microglobulin (123 aa).

The signal sequence occupies residues 1 to 21 (MSRLFLFALLGHLCFLPYLDA). An Ig-like C1-type domain is found at 29 to 118 (PRVQVYSRYP…STLNEPKVVK (90 aa)). A disulfide bridge links C49 with C104.

This sequence belongs to the beta-2-microglobulin family. In terms of assembly, heterodimer of an alpha chain and a beta chain. Beta-2-microglobulin is the beta-chain of major histocompatibility complex class I molecules.

The protein resides in the secreted. Component of the class I major histocompatibility complex (MHC). Involved in the presentation of peptide antigens to the immune system. This is Beta-2-microglobulin (B2M) from Monodelphis domestica (Gray short-tailed opossum).